We begin with the raw amino-acid sequence, 785 residues long: Semaphorin-3E (785 aa).

A signal peptide spans 1 to 25 (MLGRMASAQDLLILALCGLLLELPA). The 485-residue stretch at 36–520 (RLRLSHKELW…TESVIAQVKF (485 aa)) folds into the Sema domain. N-linked (GlcNAc...) asparagine glycosylation occurs at Asn-48. A disulfide bridge links Cys-109 with Cys-119. An N-linked (GlcNAc...) asparagine glycan is attached at Asn-130. Disulfide bonds link Cys-137–Cys-146, Cys-274–Cys-386, Cys-298–Cys-346, and Cys-523–Cys-541. Asn-600 is a glycosylation site (N-linked (GlcNAc...) asparagine). Positions 651 to 740 (LDAGTYFCQT…EYCEKVWCTD (90 aa)) constitute an Ig-like C2-type domain. The cysteines at positions 658 and 733 are disulfide-linked. The disordered stretch occupies residues 744–785 (KKLKMSPSKWKYANPQEKRQDQEKKARIRPEHYRLPRNIADS). The segment covering 759 to 777 (QEKRQDQEKKARIRPEHYR) has biased composition (basic and acidic residues).

The protein belongs to the semaphorin family. As to expression, collapsin-1, -2, -3, and -5 bind to overlapping but distinct axon tracts.

It is found in the secreted. Its function is as follows. Plays an important role in signaling via the cell surface receptor PLXND1. Mediates reorganization of the actin cytoskeleton, leading to the retraction of cell projections. Promotes focal adhesion disassembly and inhibits adhesion of endothelial cells to the extracellular matrix. Regulates angiogenesis. Can down-regulate sprouting angiogenesis. Required for normal vascular patterning during embryogenesis. Induces the collapse and paralysis of neuronal growth cones. Plays an important role in ensuring the specificity of synapse formation. This chain is Semaphorin-3E (SEMA3E), found in Gallus gallus (Chicken).